Reading from the N-terminus, the 95-residue chain is Exodeoxyribonuclease 7 small subunit (95 aa).

The segment covering 62 to 83 has biased composition (basic and acidic residues); the sequence is LTKDESKKTNKTGFRGESKTTE. Residues 62–95 form a disordered region; that stretch reads LTKDESKKTNKTGFRGESKTTETKNNTAQEEDLF.

It belongs to the XseB family. In terms of assembly, heterooligomer composed of large and small subunits.

Its subcellular location is the cytoplasm. The enzyme catalyses Exonucleolytic cleavage in either 5'- to 3'- or 3'- to 5'-direction to yield nucleoside 5'-phosphates.. Bidirectionally degrades single-stranded DNA into large acid-insoluble oligonucleotides, which are then degraded further into small acid-soluble oligonucleotides. This is Exodeoxyribonuclease 7 small subunit from Leptospira interrogans serogroup Icterohaemorrhagiae serovar copenhageni (strain Fiocruz L1-130).